Consider the following 165-residue polypeptide: Choriogonadotropin subunit beta 3 (165 aa).

The first 20 residues, 1 to 20, serve as a signal peptide directing secretion; the sequence is MEMFQGLLLLLLLSMGGTWA. 6 disulfides stabilise this stretch: Cys29/Cys77, Cys43/Cys92, Cys46/Cys130, Cys54/Cys108, Cys58/Cys110, and Cys113/Cys120. N-linked (GlcNAc...) asparagine glycans are attached at residues Asn33 and Asn50. A disordered region spans residues 131 to 165; it reads DDPRFQDSSSSKAPPPSLPSPSRLPGPSDTPILPQ. O-linked (GalNAc...) serine glycosylation is found at Ser141, Ser147, Ser152, and Ser158. A compositionally biased stretch (pro residues) spans 143–154; sequence APPPSLPSPSRL.

It belongs to the glycoprotein hormones subunit beta family. In terms of assembly, heterodimer of a common alpha chain identical in LH, FSH, TSH and HCG and a unique beta chain distinct in each of the hormones. High expression in the placenta throughout pregnancy.

The protein resides in the secreted. Functionally, beta subunit of the human chorionic gonadotropin (hCG). hCG is a complex glycoprotein composed of two glycosylated subunits alpha and beta which are non-covalently associated. The alpha subunit is identical to those in the pituitary gonadotropin hormones (LH, FSH and TSH). The beta subunits are distinct in each of the hormones and confer receptor and biological specificity. Has an essential role in pregnancy and maternal adaptation. Stimulates the ovaries to synthesize the steroids that are essential for the maintenance of pregnancy. This Homo sapiens (Human) protein is Choriogonadotropin subunit beta 3 (CGB3).